The following is a 505-amino-acid chain: Glutamate--tRNA ligase (505 aa).

Positions 12–22 match the 'HIGH' region motif; that stretch reads PSPTGDPHVGT. Residues 253–257 carry the 'KMSKS' region motif; that stretch reads KLSKR. Residue lysine 256 participates in ATP binding.

The protein belongs to the class-I aminoacyl-tRNA synthetase family. Glutamate--tRNA ligase type 1 subfamily. As to quaternary structure, monomer.

Its subcellular location is the cytoplasm. It carries out the reaction tRNA(Glu) + L-glutamate + ATP = L-glutamyl-tRNA(Glu) + AMP + diphosphate. Functionally, catalyzes the attachment of glutamate to tRNA(Glu) in a two-step reaction: glutamate is first activated by ATP to form Glu-AMP and then transferred to the acceptor end of tRNA(Glu). The sequence is that of Glutamate--tRNA ligase from Chlamydia abortus (strain DSM 27085 / S26/3) (Chlamydophila abortus).